Reading from the N-terminus, the 374-residue chain is UDP-N-acetylglucosamine--N-acetylmuramyl-(pentapeptide) pyrophosphoryl-undecaprenol N-acetylglucosamine transferase (374 aa).

Residues 13–15 (TGG), Asn124, Arg165, Ser193, and Gln294 each bind UDP-N-acetyl-alpha-D-glucosamine.

It belongs to the glycosyltransferase 28 family. MurG subfamily.

It is found in the cell inner membrane. The enzyme catalyses di-trans,octa-cis-undecaprenyl diphospho-N-acetyl-alpha-D-muramoyl-L-alanyl-D-glutamyl-meso-2,6-diaminopimeloyl-D-alanyl-D-alanine + UDP-N-acetyl-alpha-D-glucosamine = di-trans,octa-cis-undecaprenyl diphospho-[N-acetyl-alpha-D-glucosaminyl-(1-&gt;4)]-N-acetyl-alpha-D-muramoyl-L-alanyl-D-glutamyl-meso-2,6-diaminopimeloyl-D-alanyl-D-alanine + UDP + H(+). The protein operates within cell wall biogenesis; peptidoglycan biosynthesis. In terms of biological role, cell wall formation. Catalyzes the transfer of a GlcNAc subunit on undecaprenyl-pyrophosphoryl-MurNAc-pentapeptide (lipid intermediate I) to form undecaprenyl-pyrophosphoryl-MurNAc-(pentapeptide)GlcNAc (lipid intermediate II). The chain is UDP-N-acetylglucosamine--N-acetylmuramyl-(pentapeptide) pyrophosphoryl-undecaprenol N-acetylglucosamine transferase from Rhizobium etli (strain ATCC 51251 / DSM 11541 / JCM 21823 / NBRC 15573 / CFN 42).